The primary structure comprises 334 residues: Biotin synthase (334 aa).

Residues 48-275 (NQVQTSQLLS…RSMVRLSAGR (228 aa)) form the Radical SAM core domain. Residues Cys-63, Cys-67, and Cys-70 each coordinate [4Fe-4S] cluster. [2Fe-2S] cluster contacts are provided by Cys-107, Cys-138, Cys-198, and Arg-270.

The protein belongs to the radical SAM superfamily. Biotin synthase family. As to quaternary structure, homodimer. Requires [4Fe-4S] cluster as cofactor. [2Fe-2S] cluster serves as cofactor.

The catalysed reaction is (4R,5S)-dethiobiotin + (sulfur carrier)-SH + 2 reduced [2Fe-2S]-[ferredoxin] + 2 S-adenosyl-L-methionine = (sulfur carrier)-H + biotin + 2 5'-deoxyadenosine + 2 L-methionine + 2 oxidized [2Fe-2S]-[ferredoxin]. It participates in cofactor biosynthesis; biotin biosynthesis; biotin from 7,8-diaminononanoate: step 2/2. Its function is as follows. Catalyzes the conversion of dethiobiotin (DTB) to biotin by the insertion of a sulfur atom into dethiobiotin via a radical-based mechanism. The protein is Biotin synthase of Maricaulis maris (strain MCS10) (Caulobacter maris).